Reading from the N-terminus, the 1249-residue chain is Calmodulin-regulated spectrin-associated protein 3 (1249 aa).

7 disordered regions span residues 183–205 (KTEQ…APAQ), 328–385 (PDGH…SMSH), 430–457 (VSSD…GDLP), 473–609 (LLPD…RLEE), 632–696 (LGKS…HEGL), 714–1029 (QRDM…SALA), and 1061–1111 (NNLG…TGPR). Thr-184 is subject to Phosphothreonine. Over residues 189-205 (AQRASPAAPADGAAPAQ) the composition is skewed to low complexity. At Ser-193 the chain carries Phosphoserine. The 110-residue stretch at 203-312 (PAQPSIRYRK…LVVMLAELFM (110 aa)) folds into the Calponin-homology (CH) domain. 7 positions are modified to phosphoserine: Ser-334, Ser-341, Ser-347, Ser-351, Ser-368, Ser-373, and Ser-382. The segment covering 341–352 (SPPQNNSGSSSP) has biased composition (low complexity). The span at 364-383 (GGPQSPLRGSTGSLKSSPSM) shows a compositional bias: polar residues. A compositionally biased stretch (pro residues) spans 437 to 454 (PPRPAPARTPTQPPPEPG). Residues Ser-547, Ser-554, and Ser-560 each carry the phosphoserine modification. Residues 568–579 (AERKKQLVKAEA) show a composition bias toward basic and acidic residues. The span at 594–604 (EALSSEMSELS) shows a compositional bias: low complexity. The stretch at 594 to 628 (EALSSEMSELSARLEEKRRAIEAQKRRIEAIFAKH) forms a coiled coil. The span at 647 to 657 (GEAEAEAEEAD) shows a compositional bias: acidic residues. Phosphoserine is present on Ser-685. Residues 696–729 (LGEYNRAVSKLSAALSSLQRDMQRLTDQQQRLLA) are a coiled coil. Over residues 731-741 (PEAPGSAPPPA) the composition is skewed to pro residues. Over residues 754-779 (AASPSPARRVPATRRSPGPGPSQSPR) the composition is skewed to low complexity. Ser-769 carries the post-translational modification Phosphoserine. Thr-799 is modified (phosphothreonine). At Ser-814 the chain carries Phosphoserine. A compositionally biased stretch (polar residues) spans 814 to 825 (SPSQVPVQTRSS). Residues 889-940 (YKDEDKPEDEMAQKRASLLERQQRRAEEARRRKQWQEVEKEQRREEAARLAQ) are compositionally biased toward basic and acidic residues. Residues 896–935 (EDEMAQKRASLLERQQRRAEEARRRKQWQEVEKEQRREEA) are a coiled coil. The span at 950-964 (VSAVPMATPAPAARA) shows a compositional bias: low complexity. The segment covering 970-998 (VGPRKGDFTRQEYERRAQLKLMDDLDKVL) has biased composition (basic and acidic residues). Residue Ser-1074 is modified to Phosphoserine. The CKK domain maps to 1109–1243 (GPRLYKEPSA…QGKKPTTPKK (135 aa)).

It belongs to the CAMSAP1 family. In terms of assembly, interacts with PLEKHA7. Interacts with CAMSAP2. Interacts with KATNA1 and KATNB1; leading to regulate the length of CAMSAP3-decorated microtubule stretches. Interacts with AKAP9; regulating Golgi assembly in epithelial cells. Interacts with MACF1. Interacts with AKNA.

The protein resides in the cytoplasm. The protein localises to the cytoskeleton. It localises to the cell junction. Its subcellular location is the adherens junction. It is found in the cilium axoneme. The protein resides in the cilium basal body. Key microtubule-organizing protein that specifically binds the minus-end of non-centrosomal microtubules and regulates their dynamics and organization. Specifically recognizes growing microtubule minus-ends and autonomously decorates and stabilizes microtubule lattice formed by microtubule minus-end polymerization. Acts on free microtubule minus-ends that are not capped by microtubule-nucleating proteins or other factors and protects microtubule minus-ends from depolymerization. In addition, it also reduces the velocity of microtubule polymerization. Required for the biogenesis and the maintenance of zonula adherens by anchoring the minus-end of microtubules to zonula adherens and by recruiting the kinesin KIFC3 to those junctional sites. Required for orienting the apical-to-basal polarity of microtubules in epithelial cells: acts by tethering non-centrosomal microtubules to the apical cortex, leading to their longitudinal orientation. Plays a key role in early embryos, which lack centrosomes: accumulates at the microtubule bridges that connect pairs of cells and enables the formation of a non-centrosomal microtubule-organizing center that directs intracellular transport in the early embryo. Couples non-centrosomal microtubules with actin: interaction with MACF1 at the minus ends of non-centrosomal microtubules, tethers the microtubules to actin filaments, regulating focal adhesion size and cell migration. Plays a key role in the generation of non-centrosomal microtubules by accumulating in the pericentrosomal region and cooperating with KATNA1 to release non-centrosomal microtubules from the centrosome. Through the microtubule cytoskeleton, also regulates the organization of cellular organelles including the Golgi and the early endosomes. Through interaction with AKAP9, involved in translocation of Golgi vesicles in epithelial cells, where microtubules are mainly non-centrosomal. Plays an important role in motile cilia function by facilitatating proper orientation of basal bodies and formation of central microtubule pairs in motile cilia. This Homo sapiens (Human) protein is Calmodulin-regulated spectrin-associated protein 3.